Here is a 609-residue protein sequence, read N- to C-terminus: UvrABC system protein C (609 aa).

The 79-residue stretch at 13–91 (HQPGVYRMFD…IKAFQPRYNV (79 aa)) folds into the GIY-YIG domain. The 36-residue stretch at 201–236 (QQVLEHLIKKMEQASMQLNFEQAAYFRDQIQAIRAV) folds into the UVR domain.

The protein belongs to the UvrC family. As to quaternary structure, interacts with UvrB in an incision complex.

Its subcellular location is the cytoplasm. In terms of biological role, the UvrABC repair system catalyzes the recognition and processing of DNA lesions. UvrC both incises the 5' and 3' sides of the lesion. The N-terminal half is responsible for the 3' incision and the C-terminal half is responsible for the 5' incision. In Histophilus somni (strain 2336) (Haemophilus somnus), this protein is UvrABC system protein C.